Reading from the N-terminus, the 132-residue chain is MKYLFTILLIFICKYGYTFVSNPLLYPFPNDTKIIIHSEGNGKIKKGILKITNPGESPWIVQSWTEGSEGKKTAVYPALARIEAKSSLVLKIYPQPNDKDKSEWMVVLFIPPDSLRKPSELTIPIAYRLKII.

This Escherichia coli protein is Protein FasE (fasE).